Reading from the N-terminus, the 413-residue chain is Short-chain specific acyl-CoA dehydrogenase, mitochondrial (413 aa).

The transit peptide at 1–24 (MAAALLARACGPVRGALWPRDCRR) directs the protein to the mitochondrion. Residue Thr-27 is modified to Phosphothreonine. Position 51 is an N6-acetyllysine; alternate (Lys-51). N6-succinyllysine; alternate is present on Lys-51. Lys-72 is subject to N6-acetyllysine. At Lys-129 the chain carries N6-acetyllysine; alternate. An N6-succinyllysine; alternate modification is found at Lys-129. FAD is bound by residues 152-161 (FALSEPGNGS) and 185-187 (WIT). Position 161 (Ser-161) interacts with substrate. Lys-208 bears the N6-acetyllysine mark. At Lys-262 the chain carries N6-acetyllysine; alternate. The residue at position 262 (Lys-262) is an N6-succinyllysine; alternate. Residue 269–272 (DMGR) participates in substrate binding. FAD is bound at residue Arg-297. At Lys-306 the chain carries N6-acetyllysine; alternate. Lys-306 carries the N6-succinyllysine; alternate modification. Residues Gln-308 and 366–370 (QILGG) contribute to the FAD site. Glu-393 (proton acceptor) is an active-site residue. A substrate-binding site is contributed by Gly-394. 395 to 397 (TSE) is a binding site for FAD.

Belongs to the acyl-CoA dehydrogenase family. As to quaternary structure, homotetramer. Requires FAD as cofactor.

It localises to the mitochondrion matrix. It carries out the reaction a short-chain 2,3-saturated fatty acyl-CoA + oxidized [electron-transfer flavoprotein] + H(+) = a short-chain (2E)-enoyl-CoA + reduced [electron-transfer flavoprotein]. It catalyses the reaction butanoyl-CoA + oxidized [electron-transfer flavoprotein] + H(+) = (2E)-butenoyl-CoA + reduced [electron-transfer flavoprotein]. The catalysed reaction is pentanoyl-CoA + oxidized [electron-transfer flavoprotein] + H(+) = (2E)-pentenoyl-CoA + reduced [electron-transfer flavoprotein]. The enzyme catalyses hexanoyl-CoA + oxidized [electron-transfer flavoprotein] + H(+) = (2E)-hexenoyl-CoA + reduced [electron-transfer flavoprotein]. Its pathway is lipid metabolism; mitochondrial fatty acid beta-oxidation. Short-chain specific acyl-CoA dehydrogenase is one of the acyl-CoA dehydrogenases that catalyze the first step of mitochondrial fatty acid beta-oxidation, an aerobic process breaking down fatty acids into acetyl-CoA and allowing the production of energy from fats. The first step of fatty acid beta-oxidation consists in the removal of one hydrogen from C-2 and C-3 of the straight-chain fatty acyl-CoA thioester, resulting in the formation of trans-2-enoyl-CoA. Among the different mitochondrial acyl-CoA dehydrogenases, short-chain specific acyl-CoA dehydrogenase acts specifically on acyl-CoAs with saturated 4 to 6 carbons long primary chains. The sequence is that of Short-chain specific acyl-CoA dehydrogenase, mitochondrial (ACADS) from Sus scrofa (Pig).